The primary structure comprises 340 residues: Guanine nucleotide-binding protein subunit beta-4 (340 aa).

Ser2 is subject to N-acetylserine. The residue at position 2 (Ser2) is a Phosphoserine. WD repeat units follow at residues 53–92 (GHLAKIYAMHWGYDSRLLVSASQDGKLIIWDSYTTNKMHA), 95–134 (LRSSWVMTCAYAPSGNYVACGGLDNICSIYNLKTREGNVR), 141–179 (GHTGYLSCCRFLDDGQIITSSGDTTCALWDIETGQQTTT), 182–221 (GHSGDVMSLSLSPDLKTFVSGACDASSKLWDIRDGMCRQS), and 224–263 (GHISDINAVSFFPSGYAFATGSDDATCRLFDLRADQELLL). Position 266 is a phosphohistidine (His266). 2 WD repeats span residues 268 to 307 (NIICGITSVAFSKSGRLLLAGYDDFNCSVWDALKGGRAGV) and 310 to 339 (GHDNRVSCLGVTDDGMAVATGSWDSFLRIW).

The protein belongs to the WD repeat G protein beta family. In terms of assembly, g proteins are composed of 3 units, alpha, beta and gamma. Widely expressed in the brain. Highest levels found in the hippocampus and layers v and vi of the neocortex.

In terms of biological role, guanine nucleotide-binding proteins (G proteins) are involved as a modulator or transducer in various transmembrane signaling systems. The beta and gamma chains are required for the GTPase activity, for replacement of GDP by GTP, and for G protein-effector interaction. This is Guanine nucleotide-binding protein subunit beta-4 (Gnb4) from Rattus norvegicus (Rat).